Here is a 471-residue protein sequence, read N- to C-terminus: MKIKTRFAPSPTGYLHVGGARTALYSWLFARNQGGEFVLRIEDTDLERSTPEAIEAIMDGMNWLSLEWDEGPYFQTKRFDRYNAVIDEMLAAGTAYKCYCSKERLEALREEQMAKGEKPRYDGRCRHSHEHHADDEPCVVRFANPQDGSVVFDDQIRGPIEFSNLELDDLIIRRTDGSPTYNFCVVVDDWDMEITHVIRGEDHINNTPRQINILKALGAPVPLYAHVSMINGDDGKKLSKRHGAVSVMQYRDDGYLPEALLNYLVRLGWSHGDQEIFSREEMIKFFALDAVSKSASAFNTDKLLWLNHHYINTLAPEYVATHLQWHIEQENIDTRNGPQLAELVKLLGERCKTLKEMAQTCRYFYEDFSEFDADAAKKHLRPVARQPLEVVRDKLSALTDWTAENVHHAIQATADELEVGMGKVGMPLRVAVTGAGQSPGLDVTVHAIGKSRSVERINKALAFIAERENQQ.

The short motif at 9–19 is the 'HIGH' region element; sequence PSPTGYLHVGG. Zn(2+) contacts are provided by Cys-98, Cys-100, Cys-125, and His-127. Positions 237–241 match the 'KMSKS' region motif; that stretch reads KLSKR. Lys-240 contacts ATP.

The protein belongs to the class-I aminoacyl-tRNA synthetase family. Glutamate--tRNA ligase type 1 subfamily. In terms of assembly, monomer. Zn(2+) is required as a cofactor.

The protein resides in the cytoplasm. The enzyme catalyses tRNA(Glu) + L-glutamate + ATP = L-glutamyl-tRNA(Glu) + AMP + diphosphate. Catalyzes the attachment of glutamate to tRNA(Glu) in a two-step reaction: glutamate is first activated by ATP to form Glu-AMP and then transferred to the acceptor end of tRNA(Glu). The protein is Glutamate--tRNA ligase of Cronobacter sakazakii (strain ATCC BAA-894) (Enterobacter sakazakii).